The chain runs to 423 residues: Zinc finger and BTB domain-containing protein 6 (423 aa).

The region spanning 33-97 is the BTB domain; that stretch reads CDVSIYINDT…CYTGALEVKR (65 aa). S201 is subject to Phosphoserine. C2H2-type zinc fingers lie at residues 300–322, 325–347, 353–375, and 381–404; these read HQCP…LKMH, FLCL…IRGH, FQCT…LNIH, and YKCH…TSVH.

It localises to the nucleus. Functionally, may be involved in transcriptional regulation. This chain is Zinc finger and BTB domain-containing protein 6 (Zbtb6), found in Mus musculus (Mouse).